We begin with the raw amino-acid sequence, 87 residues long: Cytochrome c oxidase assembly factor 3, mitochondrial (87 aa).

Residues 47–69 (NNLLTAGALGVSVLAIYGYSIFS) form a helical membrane-spanning segment.

It belongs to the COA3 family.

The protein resides in the mitochondrion membrane. Functionally, plays a critical role in the biogenesis and activity of cytochrome c oxidase (COX) (complex IV). This is Cytochrome c oxidase assembly factor 3, mitochondrial (Ccdc56) from Drosophila melanogaster (Fruit fly).